The following is a 294-amino-acid chain: 4-hydroxy-tetrahydrodipicolinate synthase (294 aa).

T45 is a binding site for pyruvate. Y133 acts as the Proton donor/acceptor in catalysis. K161 serves as the catalytic Schiff-base intermediate with substrate. I203 serves as a coordination point for pyruvate.

Belongs to the DapA family. Homotetramer; dimer of dimers.

It is found in the cytoplasm. It catalyses the reaction L-aspartate 4-semialdehyde + pyruvate = (2S,4S)-4-hydroxy-2,3,4,5-tetrahydrodipicolinate + H2O + H(+). It participates in amino-acid biosynthesis; L-lysine biosynthesis via DAP pathway; (S)-tetrahydrodipicolinate from L-aspartate: step 3/4. Catalyzes the condensation of (S)-aspartate-beta-semialdehyde [(S)-ASA] and pyruvate to 4-hydroxy-tetrahydrodipicolinate (HTPA). The protein is 4-hydroxy-tetrahydrodipicolinate synthase of Buchnera aphidicola subsp. Baizongia pistaciae (strain Bp).